The sequence spans 181 residues: Translation initiation factor IF-3, chloroplastic (181 aa).

The protein belongs to the IF-3 family. Monomer.

Its subcellular location is the plastid. It localises to the chloroplast. IF-3 binds to the 30S ribosomal subunit and shifts the equilibrium between 70S ribosomes and their 50S and 30S subunits in favor of the free subunits, thus enhancing the availability of 30S subunits on which protein synthesis initiation begins. This Galdieria sulphuraria (Red alga) protein is Translation initiation factor IF-3, chloroplastic.